A 467-amino-acid chain; its full sequence is Chromosomal replication initiator protein DnaA (467 aa).

Positions 1–87 (MSSSLWLQCL…VGSRPVVAPK (87 aa)) are domain I, interacts with DnaA modulators. Residues 87-130 (KPAPVRTAADVAAESSAPAQLAQRKPIHKTWDDDSAAADITHRS) form a domain II region. The interval 131 to 347 (NVNPKHKFNN…GALNRVIANA (217 aa)) is domain III, AAA+ region. Residues G175, G177, K178, and T179 each coordinate ATP. The interval 348–467 (NFTGRPITID…YSNLIRTLSS (120 aa)) is domain IV, binds dsDNA.

This sequence belongs to the DnaA family. Oligomerizes as a right-handed, spiral filament on DNA at oriC.

Its subcellular location is the cytoplasm. Its function is as follows. Plays an essential role in the initiation and regulation of chromosomal replication. ATP-DnaA binds to the origin of replication (oriC) to initiate formation of the DNA replication initiation complex once per cell cycle. Binds the DnaA box (a 9 base pair repeat at the origin) and separates the double-stranded (ds)DNA. Forms a right-handed helical filament on oriC DNA; dsDNA binds to the exterior of the filament while single-stranded (ss)DNA is stabiized in the filament's interior. The ATP-DnaA-oriC complex binds and stabilizes one strand of the AT-rich DNA unwinding element (DUE), permitting loading of DNA polymerase. After initiation quickly degrades to an ADP-DnaA complex that is not apt for DNA replication. Binds acidic phospholipids. In Vibrio cholerae serotype O1 (strain ATCC 39315 / El Tor Inaba N16961), this protein is Chromosomal replication initiator protein DnaA.